Reading from the N-terminus, the 171-residue chain is Protein-export protein SecB (171 aa).

The protein belongs to the SecB family. In terms of assembly, homotetramer, a dimer of dimers. One homotetramer interacts with 1 SecA dimer.

The protein resides in the cytoplasm. One of the proteins required for the normal export of preproteins out of the cell cytoplasm. It is a molecular chaperone that binds to a subset of precursor proteins, maintaining them in a translocation-competent state. It also specifically binds to its receptor SecA. The sequence is that of Protein-export protein SecB from Histophilus somni (strain 129Pt) (Haemophilus somnus).